The chain runs to 211 residues: Bcl-2-related ovarian killer protein homolog B (211 aa).

Positions 32–44 (KELCRDFIHSRIT) match the BH4 motif. Residues 67–83 (VSVVLLKLGDELECMRP) carry the BH3 motif. Positions 113–132 (EVIAMGITWGKVVAIYAVAA) match the BH1 motif. Positions 165-179 (WLKKRGGWVDILKCV) match the BH2 motif. A helical transmembrane segment spans residues 190 to 210 (WLSTAVLTWREFIKTMYVYLT).

This sequence belongs to the Bcl-2 family. As to expression, expressed strongly in ovary and more weakly in eye. Little expression in other tissues examined.

The protein resides in the membrane. In terms of biological role, may play a role in apoptosis. Does not appear to show pro-apoptotic activity when expressed ectopically in early embryos. The protein is Bcl-2-related ovarian killer protein homolog B (bokb) of Danio rerio (Zebrafish).